The following is a 41-amino-acid chain: trp operon leader peptide (41 aa).

Functionally, this protein is involved in control of the biosynthesis of tryptophan. In Vibrio parahaemolyticus serotype O3:K6 (strain RIMD 2210633), this protein is trp operon leader peptide (trpL).